The chain runs to 94 residues: Integration host factor subunit beta (94 aa).

Belongs to the bacterial histone-like protein family. In terms of assembly, heterodimer of an alpha and a beta chain.

This protein is one of the two subunits of integration host factor, a specific DNA-binding protein that functions in genetic recombination as well as in transcriptional and translational control. This is Integration host factor subunit beta from Mannheimia succiniciproducens (strain KCTC 0769BP / MBEL55E).